The chain runs to 477 residues: Ribulose bisphosphate carboxylase large chain (477 aa).

A propeptide spanning residues Met1 to Ser2 is cleaved from the precursor. Pro3 bears the N-acetylproline mark. At Lys14 the chain carries N6,N6,N6-trimethyllysine. Asn123 and Thr173 together coordinate substrate. Catalysis depends on Lys175, which acts as the Proton acceptor. Lys177 contributes to the substrate binding site. The Mg(2+) site is built by Lys201, Asp203, and Glu204. Residue Lys201 is modified to N6-carboxylysine. Catalysis depends on His294, which acts as the Proton acceptor. Substrate contacts are provided by Arg295, His327, and Ser379.

It belongs to the RuBisCO large chain family. Type I subfamily. Heterohexadecamer of 8 large chains and 8 small chains; disulfide-linked. The disulfide link is formed within the large subunit homodimers. Mg(2+) serves as cofactor. The disulfide bond which can form in the large chain dimeric partners within the hexadecamer appears to be associated with oxidative stress and protein turnover.

The protein localises to the plastid. Its subcellular location is the chloroplast. The enzyme catalyses 2 (2R)-3-phosphoglycerate + 2 H(+) = D-ribulose 1,5-bisphosphate + CO2 + H2O. It carries out the reaction D-ribulose 1,5-bisphosphate + O2 = 2-phosphoglycolate + (2R)-3-phosphoglycerate + 2 H(+). Its function is as follows. RuBisCO catalyzes two reactions: the carboxylation of D-ribulose 1,5-bisphosphate, the primary event in carbon dioxide fixation, as well as the oxidative fragmentation of the pentose substrate in the photorespiration process. Both reactions occur simultaneously and in competition at the same active site. This is Ribulose bisphosphate carboxylase large chain from Carthamus tinctorius (Safflower).